Reading from the N-terminus, the 320-residue chain is o-succinylbenzoate synthase (320 aa).

K133 acts as the Proton donor in catalysis. Mg(2+)-binding residues include D161, E190, and D213. Catalysis depends on K235, which acts as the Proton acceptor.

It belongs to the mandelate racemase/muconate lactonizing enzyme family. MenC type 1 subfamily. Requires a divalent metal cation as cofactor.

The catalysed reaction is (1R,6R)-6-hydroxy-2-succinyl-cyclohexa-2,4-diene-1-carboxylate = 2-succinylbenzoate + H2O. It participates in quinol/quinone metabolism; 1,4-dihydroxy-2-naphthoate biosynthesis; 1,4-dihydroxy-2-naphthoate from chorismate: step 4/7. Its pathway is quinol/quinone metabolism; menaquinone biosynthesis. Converts 2-succinyl-6-hydroxy-2,4-cyclohexadiene-1-carboxylate (SHCHC) to 2-succinylbenzoate (OSB). The protein is o-succinylbenzoate synthase of Escherichia coli O127:H6 (strain E2348/69 / EPEC).